Consider the following 129-residue polypeptide: Flagellar assembly factor FliW (129 aa).

Belongs to the FliW family. Interacts with translational regulator CsrA and flagellin(s).

It localises to the cytoplasm. Acts as an anti-CsrA protein, binds CsrA and prevents it from repressing translation of its target genes, one of which is flagellin. Binds to flagellin and participates in the assembly of the flagellum. This Campylobacter jejuni subsp. doylei (strain ATCC BAA-1458 / RM4099 / 269.97) protein is Flagellar assembly factor FliW.